The following is a 1008-amino-acid chain: Probable pre-mRNA-splicing factor ATP-dependent RNA helicase mog-4 (1008 aa).

Disordered regions lie at residues 104 to 146 (SSTK…SESD) and 169 to 202 (NKKE…REES). Over residues 127–137 (KASKPGKSVKP) the composition is skewed to low complexity. The Helicase ATP-binding domain maps to 374-538 (IEAVKEHQVL…FDDAPIFRIP (165 aa)). 387–394 (GETGSGKT) lines the ATP pocket. A DEAH box motif is present at residues 485–488 (DEAH). The Helicase C-terminal domain occupies 563 to 737 (TIMQIHLTQP…NVVLMLKSLG (175 aa)). Residues 988–1008 (EDATNKKMPKNKGKSGKDLER) are disordered.

Belongs to the DEAD box helicase family. DEAH subfamily. DDX16/PRP8 sub-subfamily. As to quaternary structure, interacts with mep-1 and smn-1.

Its subcellular location is the nucleus. The enzyme catalyses ATP + H2O = ADP + phosphate + H(+). In terms of biological role, ATP-binding RNA helicase involved in pre-mRNA splicing. Operates during embryogenesis. The chain is Probable pre-mRNA-splicing factor ATP-dependent RNA helicase mog-4 (mog-4) from Caenorhabditis elegans.